Here is a 268-residue protein sequence, read N- to C-terminus: Probable ribosomal RNA small subunit methyltransferase A (268 aa).

S-adenosyl-L-methionine is bound by residues histidine 23, leucine 25, glycine 50, glutamate 71, aspartate 95, and asparagine 110.

The protein belongs to the class I-like SAM-binding methyltransferase superfamily. rRNA adenine N(6)-methyltransferase family. RsmA subfamily.

It localises to the cytoplasm. In terms of biological role, specifically dimethylates two adjacent adenosines in the loop of a conserved hairpin near the 3'-end of 16S rRNA in the 30S particle. May play a critical role in biogenesis of 30S subunits. The protein is Probable ribosomal RNA small subunit methyltransferase A of Pyrococcus horikoshii (strain ATCC 700860 / DSM 12428 / JCM 9974 / NBRC 100139 / OT-3).